We begin with the raw amino-acid sequence, 72 residues long: Hypotensin-1 (72 aa).

The N-terminal stretch at methionine 1–serine 24 is a signal peptide. The propeptide occupies leucine 25–arginine 35. Phosphoserine is present on serine 41. Residues glutamate 53 to aspartate 72 form a disordered region. Positions arginine 61 to aspartate 72 are excised as a propeptide.

This sequence belongs to the non-disulfide-bridged peptide (NDBP) superfamily. Undergoes enzymatic cleavages by carboxypeptidases, endopeptidases, and aminopeptidases resulting in at least 46 fragments of this protein. In terms of tissue distribution, expressed by the venom gland.

It localises to the secreted. Agonist of the B2 bradykinin receptor (BDKRB2). Potentiates the hypotensive effect of bradykinin (BK) and induces a direct vasorelaxing effect independent of BK, by endothelium- and nitric oxide (NO)-dependent mechanisms in rat aortic ring preparations. Also exerts proangiogenic, antiinflammatory, and antifibrogenic activities. Does not inhibit the angiotensin-converting enzyme (ACE) but increases its activity, and inhibits neprilysin (NEP) in a non-competitive manner. Exerts intermediate cytotoxicity and pro-inflammatory effects on mouse macrophages, and increases the phagocytic activity of these murine cells. In terms of biological role, presents moderate hemolytic activity at physiological concentrations (micromolar range). Does not induce mast cell degranulation, lactate dehydrogenase (LDH) release from mast cells and antimicrobial effects. In vivo, causes intense pain (but no edema formation), when injected in mice hind paws. Also induces discomfort and anxiety in mice, as it moderately diminishes locomotion and moderately increases rearing behavior. The chain is Hypotensin-1 from Tityus serrulatus (Brazilian scorpion).